The following is a 141-amino-acid chain: Cystatin-S (141 aa).

The signal sequence occupies residues 1–27 (MAYLLHAQLFLLTTFILVLNMRLCPVL). The Secondary area of contact signature appears at 76-80 (QVVAG). Intrachain disulfides connect C94–C104 and C118–C138.

This sequence belongs to the cystatin family. As to expression, found in saliva, tears, urine and seminal fluid.

The protein resides in the secreted. Functionally, this protein strongly inhibits papain and ficin, partially inhibits stem bromelain and bovine cathepsin C, but does not inhibit porcine cathepsin B or clostripain. Papain is inhibited non-competitively. This is Cystatin-S (Cst4) from Rattus norvegicus (Rat).